The following is a 560-amino-acid chain: Beta-glucosidase 26, peroxisomal (560 aa).

A beta-D-glucoside is bound by residues Gln-33, His-137, 182–183 (NE), Tyr-326, Glu-398, Trp-450, 457–458 (EW), and Tyr-466. Glu-183 (proton donor) is an active-site residue. Residue Glu-398 is the Nucleophile of the active site.

The protein belongs to the glycosyl hydrolase 1 family.

The protein localises to the peroxisome. The enzyme catalyses Hydrolysis of terminal, non-reducing beta-D-glucosyl residues with release of beta-D-glucose.. In terms of biological role, possesses beta-glucosidase activity toward 4-methyl-umbelliferyl-beta-D-glucoside in vitro. Possesses myrosinase activity toward indol-3-yl-methylglucosinolate (I3M) and 4-methoxy-indol-3-yl-methylglucosinolate (4MO-I3M) in vivo. Component of an inducible preinvasion resistance mechanism that prevents penetration of the nonhost fungal species B.graminis and E.pisi. Involved in indole glucosinolate (IGS) activation during pattern-triggered immunity (PTI). Functions as a myrosinase for the breakdown of flg22-triggered IGS. Required for both callose deposition and glucosinolate activation during pathogen-triggered resistance. During fungal attack, required for IGS activation that mediates broad-spectrum antifungal defense. The sequence is that of Beta-glucosidase 26, peroxisomal from Arabidopsis thaliana (Mouse-ear cress).